The chain runs to 850 residues: Serine/threonine-protein phosphatase 6 regulatory subunit 3-B (850 aa).

3 disordered regions span residues 610–652, 683–778, and 793–850; these read NISY…VNHE, SDGS…MKET, and KSEE…NGPV. The span at 627–638 shows a compositional bias: acidic residues; that stretch reads DSEESTDSEEEE. Polar residues-rich tracts occupy residues 703–731 and 764–778; these read ASFS…TSTE and DQMT…MKET. A compositionally biased stretch (low complexity) spans 826 to 839; the sequence is PSSSSQEQRISEQI.

The protein belongs to the SAPS family.

Regulatory subunit of protein phosphatase 6 (PP6). May function as a scaffolding PP6 subunit. The polypeptide is Serine/threonine-protein phosphatase 6 regulatory subunit 3-B (ppp6r3-b) (Xenopus laevis (African clawed frog)).